Consider the following 476-residue polypeptide: Adenylosuccinate synthetase, chloroplastic (476 aa).

A compositionally biased stretch (low complexity) spans 1-20 (AAAAAGRGRSFSPAAPAPSS). The interval 1–34 (AAAAAGRGRSFSPAAPAPSSVRLPGRQAPAPAAA) is disordered. GTP is bound by residues 63–69 (GDEGKGK) and 91–93 (GHT). Aspartate 64 acts as the Proton acceptor in catalysis. Mg(2+) contacts are provided by aspartate 64 and glycine 91. IMP contacts are provided by residues 64–67 (DEGK), 89–92 (NAGH), threonine 181, arginine 195, glutamine 275, threonine 290, and arginine 354. Histidine 92 acts as the Proton donor in catalysis. 350–356 (TTTGRPR) provides a ligand contact to substrate. GTP contacts are provided by residues arginine 356, 382 to 384 (KLD), and 465 to 467 (GVG).

It belongs to the adenylosuccinate synthetase family. As to quaternary structure, homodimer. Mg(2+) serves as cofactor.

The protein resides in the plastid. It localises to the chloroplast. It carries out the reaction IMP + L-aspartate + GTP = N(6)-(1,2-dicarboxyethyl)-AMP + GDP + phosphate + 2 H(+). It participates in purine metabolism; AMP biosynthesis via de novo pathway; AMP from IMP: step 1/2. Plays an important role in the de novo pathway and in the salvage pathway of purine nucleotide biosynthesis. Catalyzes the first committed step in the biosynthesis of AMP from IMP. This chain is Adenylosuccinate synthetase, chloroplastic, found in Triticum aestivum (Wheat).